A 132-amino-acid chain; its full sequence is MSLSDPIANFLTSIRNGQLSMNKVVTVSYSYVIHAILQILLSEGYIDGFTEKLRSTNIKFFEVKLKYYNGVPVINRICRVSKPGKRCYCSAKGMPKFYNGLGLYIISTSKGIMSDYNARKSGVGGEILCGVF.

This sequence belongs to the universal ribosomal protein uS8 family. Part of the 30S ribosomal subunit. Contacts proteins S5 and S12.

In terms of biological role, one of the primary rRNA binding proteins, it binds directly to 16S rRNA central domain where it helps coordinate assembly of the platform of the 30S subunit. The polypeptide is Small ribosomal subunit protein uS8 (Ehrlichia ruminantium (strain Welgevonden)).